The primary structure comprises 855 residues: DNA mismatch repair protein MutS (855 aa).

616–623 is an ATP binding site; the sequence is GPNMGGKS.

This sequence belongs to the DNA mismatch repair MutS family.

Functionally, this protein is involved in the repair of mismatches in DNA. It is possible that it carries out the mismatch recognition step. This protein has a weak ATPase activity. This Escherichia coli O139:H28 (strain E24377A / ETEC) protein is DNA mismatch repair protein MutS.